We begin with the raw amino-acid sequence, 288 residues long: UDP-3-O-acyl-N-acetylglucosamine deacetylase (288 aa).

Zn(2+) contacts are provided by His-79, His-236, and Asp-240. The Proton donor role is filled by His-263.

This sequence belongs to the LpxC family. Zn(2+) is required as a cofactor.

The enzyme catalyses a UDP-3-O-[(3R)-3-hydroxyacyl]-N-acetyl-alpha-D-glucosamine + H2O = a UDP-3-O-[(3R)-3-hydroxyacyl]-alpha-D-glucosamine + acetate. Its pathway is glycolipid biosynthesis; lipid IV(A) biosynthesis; lipid IV(A) from (3R)-3-hydroxytetradecanoyl-[acyl-carrier-protein] and UDP-N-acetyl-alpha-D-glucosamine: step 2/6. In terms of biological role, catalyzes the hydrolysis of UDP-3-O-myristoyl-N-acetylglucosamine to form UDP-3-O-myristoylglucosamine and acetate, the committed step in lipid A biosynthesis. This Rickettsia felis (strain ATCC VR-1525 / URRWXCal2) (Rickettsia azadi) protein is UDP-3-O-acyl-N-acetylglucosamine deacetylase.